A 198-amino-acid chain; its full sequence is FMN-dependent NADH:quinone oxidoreductase (198 aa).

Residues serine 10, 16-18, 94-97, and 138-141 contribute to the FMN site; these read SQS, MYNF, and TRGG.

This sequence belongs to the azoreductase type 1 family. In terms of assembly, homodimer. The cofactor is FMN.

It carries out the reaction 2 a quinone + NADH + H(+) = 2 a 1,4-benzosemiquinone + NAD(+). The catalysed reaction is N,N-dimethyl-1,4-phenylenediamine + anthranilate + 2 NAD(+) = 2-(4-dimethylaminophenyl)diazenylbenzoate + 2 NADH + 2 H(+). In terms of biological role, quinone reductase that provides resistance to thiol-specific stress caused by electrophilic quinones. Functionally, also exhibits azoreductase activity. Catalyzes the reductive cleavage of the azo bond in aromatic azo compounds to the corresponding amines. The sequence is that of FMN-dependent NADH:quinone oxidoreductase from Shewanella sp. (strain MR-4).